The following is a 1343-amino-acid chain: DNA-directed RNA polymerase subunit beta (1343 aa).

The protein belongs to the RNA polymerase beta chain family. The RNAP catalytic core consists of 2 alpha, 1 beta, 1 beta' and 1 omega subunit. When a sigma factor is associated with the core the holoenzyme is formed, which can initiate transcription.

The enzyme catalyses RNA(n) + a ribonucleoside 5'-triphosphate = RNA(n+1) + diphosphate. Its function is as follows. DNA-dependent RNA polymerase catalyzes the transcription of DNA into RNA using the four ribonucleoside triphosphates as substrates. The protein is DNA-directed RNA polymerase subunit beta of Shewanella violacea.